The primary structure comprises 321 residues: Acyl-CoA 5-desaturase AL21 (321 aa).

2 consecutive transmembrane segments (helical) span residues 42-62 (IFHIILVGGLHVLCLSAPFTF) and 64-84 (WSAFWLSLTLYAVCGVFGTTL). Residues His87, His92, His124, His127, and His128 each coordinate Fe cation. A Histidine box-1 motif is present at residues 87–92 (HRNLTH). Positions 124 to 128 (HRYHH) match the Histidine box-2 motif. The chain crosses the membrane as a helical span at residues 190–210 (LQAALLYMFGGFPFIVWGMAV). Fe cation is bound by residues His227, His256, His259, and His260. The Histidine box-3 motif lies at 256 to 260 (HNNHH).

The protein belongs to the fatty acid desaturase type 1 family. Requires Fe(2+) as cofactor.

It is found in the membrane. The enzyme catalyses (11Z,14Z)-eicosadienoyl-CoA + AH2 + O2 = (5Z,11Z,14Z)-eicosatrienoyl-CoA + A + 2 H2O. It catalyses the reaction (11Z,14Z,17Z)-eicosatrienoyl-CoA + AH2 + O2 = (5Z,11Z,14Z,17Z)-eicosatetraenoyl-CoA + A + 2 H2O. It functions in the pathway lipid metabolism; polyunsaturated fatty acid biosynthesis. Functionally, catalyzes the desaturation of 20:2Delta(11,14) and 20:3Delta(11,14,17) to generate sciadonic acid (20:3Delta(5,11,14)) and juniperonic acid (20:4Delta(5,11,14,17)). The enzyme can also use 16:0 and 18:0 as substrates. In Anemone leveillei (Windflower), this protein is Acyl-CoA 5-desaturase AL21.